The sequence spans 94 residues: Protein SpdA (94 aa).

The chain crosses the membrane as a helical span at residues 41 to 68; sequence GPILLALVAAGGSVGVVMTLCLLLQTAA.

It localises to the cell membrane. Involved in plasmid transfer. The chain is Protein SpdA (spdA) from Streptomyces lividans.